The following is a 1041-amino-acid chain: RAS protein activator like-3 (1041 aa).

The interval 1 to 59 (MKPECGQTMFRTFWSRSRDSSAMDPPLQSEEDSQTQPSLPSPLTSYRWHTGGSGEKAAG) is disordered. The span at 34–44 (QTQPSLPSPLT) shows a compositional bias: polar residues. 10 positions are modified to phosphoserine: S41, S74, S187, S189, S190, S193, S239, S252, S256, and S259. Residues 218-243 (SNQVHNVRKLLKRLKEKKRAKSELGA) are a coiled coil. The PH domain occupies 220–321 (QVHNVRKLLK…WIEDLRRQFQ (102 aa)). Residues 234–256 (KKRAKSELGAYTPRDGPPSALGS) are disordered. T262 bears the Phosphothreonine mark. Positions 312–430 (WIEDLRRQFQ…APAAGLERWF (119 aa)) constitute a C2 domain. A Ras-GAP domain is found at 500–708 (GRAQALVTDL…PAMQHFLDQV (209 aa)). The segment at 790 to 910 (GEKPGFLAPR…PGDRYQTTGT (121 aa)) is disordered. A phosphoserine mark is found at S813 and S816. The span at 850 to 866 (RPTHRRPSAGSKPRPKG) shows a compositional bias: basic residues. Positions 931–1013 (QKALSLLVES…LRDSLQSLQL (83 aa)) form a coiled coil. Residues 1016–1041 (KTPGSRSQPLPLKAPCVNGADLSMGT) are disordered.

As to expression, predominantly expressed in hematopoietic tissues.

The protein localises to the cytoplasm. The protein resides in the cell cortex. Functions as a Ras GTPase-activating protein. Plays an important role in the expansion and functions of natural killer T (NKT) cells in the liver by negatively regulating RAS activity and the down-stream ERK signaling pathway. In Mus musculus (Mouse), this protein is RAS protein activator like-3 (Rasal3).